Reading from the N-terminus, the 154-residue chain is Large ribosomal subunit protein uL13 (154 aa).

Belongs to the universal ribosomal protein uL13 family. Part of the 50S ribosomal subunit.

Its function is as follows. This protein is one of the early assembly proteins of the 50S ribosomal subunit, although it is not seen to bind rRNA by itself. It is important during the early stages of 50S assembly. The sequence is that of Large ribosomal subunit protein uL13 from Bartonella tribocorum (strain CIP 105476 / IBS 506).